We begin with the raw amino-acid sequence, 187 residues long: UPF0232 protein Mb0004 (187 aa).

2 stretches are compositionally biased toward basic and acidic residues: residues 1-17 and 35-45; these read MTGSVDRPDQNRGERLM and AARARGQDAGR. Disordered regions lie at residues 1–23, 35–75, and 168–187; these read MTGSVDRPDQNRGERLMKSPGLD, AARA…DPQP, and PSWRKGPRHIAGRGPRDTYG.

It belongs to the UPF0232 family.

This Mycobacterium bovis (strain ATCC BAA-935 / AF2122/97) protein is UPF0232 protein Mb0004.